The following is a 64-amino-acid chain: Large ribosomal subunit protein uL30 (64 aa).

The tract at residues 1–22 (MAKAAKTIKVEQTGSAIRRHHS) is disordered.

This sequence belongs to the universal ribosomal protein uL30 family. Part of the 50S ribosomal subunit.

In Nitrobacter winogradskyi (strain ATCC 25391 / DSM 10237 / CIP 104748 / NCIMB 11846 / Nb-255), this protein is Large ribosomal subunit protein uL30.